The primary structure comprises 400 residues: tRNA(Met) cytidine acetate ligase (400 aa).

Residues Ile7–His20, Gly101, Asn162, and Arg187 contribute to the ATP site.

Belongs to the TmcAL family.

It localises to the cytoplasm. The enzyme catalyses cytidine(34) in elongator tRNA(Met) + acetate + ATP = N(4)-acetylcytidine(34) in elongator tRNA(Met) + AMP + diphosphate. Catalyzes the formation of N(4)-acetylcytidine (ac(4)C) at the wobble position of elongator tRNA(Met), using acetate and ATP as substrates. First activates an acetate ion to form acetyladenylate (Ac-AMP) and then transfers the acetyl group to tRNA to form ac(4)C34. In Oceanobacillus iheyensis (strain DSM 14371 / CIP 107618 / JCM 11309 / KCTC 3954 / HTE831), this protein is tRNA(Met) cytidine acetate ligase.